We begin with the raw amino-acid sequence, 156 residues long: Cellulose synthase operon protein D (156 aa).

It participates in glycan metabolism; bacterial cellulose biosynthesis. Functionally, may have a major role in the perfection of crystallization, involved either in the pore structure itself or in the organization of the pores within the linear array of terminal synthesizing complexes (TCs). This chain is Cellulose synthase operon protein D (bcsDI), found in Komagataeibacter xylinus (Gluconacetobacter xylinus).